The chain runs to 297 residues: Ribosomal RNA small subunit methyltransferase H (297 aa).

S-adenosyl-L-methionine-binding positions include 30-32 (GGY), aspartate 48, phenylalanine 75, aspartate 96, and glutamine 103.

It belongs to the methyltransferase superfamily. RsmH family.

It is found in the cytoplasm. The enzyme catalyses cytidine(1402) in 16S rRNA + S-adenosyl-L-methionine = N(4)-methylcytidine(1402) in 16S rRNA + S-adenosyl-L-homocysteine + H(+). Functionally, specifically methylates the N4 position of cytidine in position 1402 (C1402) of 16S rRNA. This chain is Ribosomal RNA small subunit methyltransferase H, found in Ehrlichia chaffeensis (strain ATCC CRL-10679 / Arkansas).